A 277-amino-acid polypeptide reads, in one-letter code: Urease accessory protein UreD (277 aa).

The protein belongs to the UreD family. UreD, UreF and UreG form a complex that acts as a GTP-hydrolysis-dependent molecular chaperone, activating the urease apoprotein by helping to assemble the nickel containing metallocenter of UreC. The UreE protein probably delivers the nickel.

Its subcellular location is the cytoplasm. Its function is as follows. Required for maturation of urease via the functional incorporation of the urease nickel metallocenter. This Pseudomonas putida (strain ATCC 47054 / DSM 6125 / CFBP 8728 / NCIMB 11950 / KT2440) protein is Urease accessory protein UreD.